A 476-amino-acid polypeptide reads, in one-letter code: Glycogen synthase (476 aa).

K15 contributes to the ADP-alpha-D-glucose binding site.

This sequence belongs to the glycosyltransferase 1 family. Bacterial/plant glycogen synthase subfamily.

The enzyme catalyses [(1-&gt;4)-alpha-D-glucosyl](n) + ADP-alpha-D-glucose = [(1-&gt;4)-alpha-D-glucosyl](n+1) + ADP + H(+). It functions in the pathway glycan biosynthesis; glycogen biosynthesis. Its function is as follows. Synthesizes alpha-1,4-glucan chains using ADP-glucose. The chain is Glycogen synthase from Halalkalibacterium halodurans (strain ATCC BAA-125 / DSM 18197 / FERM 7344 / JCM 9153 / C-125) (Bacillus halodurans).